The following is a 1954-amino-acid chain: Integrin beta-like protein C (1954 aa).

A signal peptide spans 1-20 (MNKLFYLFILIASLFILTDA). Topologically, residues 21–1883 (SHFRFGTISW…TTTQTNDNKT (1863 aa)) are extracellular. N-linked (GlcNAc...) asparagine glycans are attached at residues Asn138 and Asn354. Residues 428 to 465 (YGENCVAVPPCVNGVPNSGINGDGKCLCSNGWTGADCS) form the EGF-like domain. Cystine bridges form between Cys438-Cys453 and Cys455-Cys464. Asn479 is a glycosylation site (N-linked (GlcNAc...) asparagine). Residues 521–706 (DVYVLVDANL…TGVKNVLSKI (186 aa)) form the VWFA domain. Residues Asn1348, Asn1382, Asn1628, Asn1678, Asn1742, Asn1770, Asn1820, Asn1860, and Asn1881 are each glycosylated (N-linked (GlcNAc...) asparagine). A helical membrane pass occupies residues 1884–1904 (VLTGAIAGAAAGTALIAAAAW). Residues 1905–1954 (RLLRKAAPPTDTFFSEAAFLGDGVSSNPLYEQSASAAENPLYQSASDTTD) lie on the Cytoplasmic side of the membrane.

This sequence belongs to the SIB family. In terms of assembly, interacts with talA/talin.

It is found in the membrane. Its function is as follows. Implicated in cellular adhesion. The protein is Integrin beta-like protein C (sibC) of Dictyostelium discoideum (Social amoeba).